A 172-amino-acid chain; its full sequence is Xanthine-guanine phosphoribosyltransferase (172 aa).

5-phospho-alpha-D-ribose 1-diphosphate-binding positions include 47–48 (RG) and 106–114 (DDLVDTGKT). Asp107 contributes to the Mg(2+) binding site. 2 residues coordinate guanine: Asp110 and Ile153. Xanthine contacts are provided by Asp110 and Ile153. GMP-binding positions include 110-114 (DTGKT) and 152-153 (WI).

This sequence belongs to the purine/pyrimidine phosphoribosyltransferase family. XGPT subfamily. Homotetramer. The cofactor is Mg(2+).

It is found in the cell inner membrane. The catalysed reaction is GMP + diphosphate = guanine + 5-phospho-alpha-D-ribose 1-diphosphate. It carries out the reaction XMP + diphosphate = xanthine + 5-phospho-alpha-D-ribose 1-diphosphate. It catalyses the reaction IMP + diphosphate = hypoxanthine + 5-phospho-alpha-D-ribose 1-diphosphate. It functions in the pathway purine metabolism; GMP biosynthesis via salvage pathway; GMP from guanine: step 1/1. The protein operates within purine metabolism; XMP biosynthesis via salvage pathway; XMP from xanthine: step 1/1. Its function is as follows. Purine salvage pathway enzyme that catalyzes the transfer of the ribosyl-5-phosphate group from 5-phospho-alpha-D-ribose 1-diphosphate (PRPP) to the N9 position of the 6-oxopurines guanine and xanthine to form the corresponding ribonucleotides GMP (guanosine 5'-monophosphate) and XMP (xanthosine 5'-monophosphate), with the release of PPi. To a lesser extent, also acts on hypoxanthine. The chain is Xanthine-guanine phosphoribosyltransferase from Rhodopseudomonas palustris (strain HaA2).